The following is a 523-amino-acid chain: WD repeat-containing protein YPL247C (523 aa).

A disordered region spans residues 1-64; that stretch reads MDPFHNGNKR…TTNGGNSKRN (64 aa). Polar residues predominate over residues 9–40; sequence KRSSISFGSSQRQPYNKNNYLSGTNGPSSAAQ. Ser47 is subject to Phosphoserine. Over residues 52-64 the composition is skewed to low complexity; sequence SGNTTNGGNSKRN. Ser65 carries the phosphoserine modification. WD repeat units follow at residues 173 to 213, 241 to 281, 285 to 325, and 392 to 432; these read DVVY…RQFQ, GTFP…YVKT, AHDS…HSTI, and GHGS…MEIN. Residues 436-472 form a disordered region; sequence SKSPSIHGTSLEDPDGDTEMTDGGAGSGLNEDPLSLN.

The protein belongs to the WD repeat WDR68 family.

It localises to the cytoplasm. The protein resides in the nucleus. The protein is WD repeat-containing protein YPL247C of Saccharomyces cerevisiae (strain ATCC 204508 / S288c) (Baker's yeast).